The chain runs to 305 residues: MASPKHFLDLSAVGPQDLRTILDDARARKVATKAGTAEKPLAGKMLAMIFEKPSTRTRVSFDVGMRQLGGETLFLSGTEMQLGRAETIGDTAKVLSRYVDAIMIRTTDHSRLLELAEHATVPVINGLTDDTHPCQIMADIMTFEEHRGPVKGKTIAWTGDGNNVLHSFVEGSARFGYRMTMAVPMGSEPHDKFMNWARNNGGEIALYHDADKAVAGADCVVTDTWVSMNQEHKARGHNIFQPYQVNEALMAKAQKDALFMHCLPAHRGEEVTDAVIDGPQSVVFDEAENRLHAQKSVIAWCMGVI.

Carbamoyl phosphate contacts are provided by residues 54–57 (STRT), Gln-81, Arg-105, and 132–135 (HPCQ). L-ornithine is bound by residues Asn-163, Asp-223, and 227–228 (SM). Carbamoyl phosphate contacts are provided by residues 262 to 263 (CL) and Arg-290.

It belongs to the aspartate/ornithine carbamoyltransferase superfamily. OTCase family.

The protein resides in the cytoplasm. The enzyme catalyses carbamoyl phosphate + L-ornithine = L-citrulline + phosphate + H(+). Its pathway is amino-acid biosynthesis; L-arginine biosynthesis; L-arginine from L-ornithine and carbamoyl phosphate: step 1/3. Its function is as follows. Reversibly catalyzes the transfer of the carbamoyl group from carbamoyl phosphate (CP) to the N(epsilon) atom of ornithine (ORN) to produce L-citrulline. The protein is Ornithine carbamoyltransferase of Agrobacterium fabrum (strain C58 / ATCC 33970) (Agrobacterium tumefaciens (strain C58)).